A 117-amino-acid chain; its full sequence is Ribulose bisphosphate carboxylase small subunit 1 (117 aa).

Belongs to the RuBisCO small chain family. Heterohexadecamer of 8 large and 8 small subunits.

Its function is as follows. RuBisCO catalyzes two reactions: the carboxylation of D-ribulose 1,5-bisphosphate, the primary event in carbon dioxide fixation, as well as the oxidative fragmentation of the pentose substrate. Both reactions occur simultaneously and in competition at the same active site. Although the small subunit is not catalytic it is essential for maximal activity. The chain is Ribulose bisphosphate carboxylase small subunit 1 from Hydrogenovibrio marinus.